The primary structure comprises 480 residues: Chromosomal replication initiator protein DnaA (480 aa).

Residues 1-71 (MRHDALFERV…TTLVQQEDSE (71 aa)) form a domain I, interacts with DnaA modulators region. The tract at residues 71-137 (EILKVEILVR…RPVQAPLFGS (67 aa)) is domain II. The tract at residues 138–360 (PLDQRYGFDS…GAFNQLLFRR (223 aa)) is domain III, AAA+ region. ATP-binding residues include G184, G186, K187, and T188. Positions 361–480 (SFEPQLSIER…IELLKRLINE (120 aa)) are domain IV, binds dsDNA.

Belongs to the DnaA family. Oligomerizes as a right-handed, spiral filament on DNA at oriC.

The protein resides in the cytoplasm. Its function is as follows. Plays an essential role in the initiation and regulation of chromosomal replication. ATP-DnaA binds to the origin of replication (oriC) to initiate formation of the DNA replication initiation complex once per cell cycle. Binds the DnaA box (a 9 base pair repeat at the origin) and separates the double-stranded (ds)DNA. Forms a right-handed helical filament on oriC DNA; dsDNA binds to the exterior of the filament while single-stranded (ss)DNA is stabiized in the filament's interior. The ATP-DnaA-oriC complex binds and stabilizes one strand of the AT-rich DNA unwinding element (DUE), permitting loading of DNA polymerase. After initiation quickly degrades to an ADP-DnaA complex that is not apt for DNA replication. Binds acidic phospholipids. This is Chromosomal replication initiator protein DnaA from Rhizobium meliloti (strain 1021) (Ensifer meliloti).